The following is a 252-amino-acid chain: 2-succinyl-6-hydroxy-2,4-cyclohexadiene-1-carboxylate synthase (252 aa).

The protein belongs to the AB hydrolase superfamily. MenH family. Monomer.

It carries out the reaction 5-enolpyruvoyl-6-hydroxy-2-succinyl-cyclohex-3-ene-1-carboxylate = (1R,6R)-6-hydroxy-2-succinyl-cyclohexa-2,4-diene-1-carboxylate + pyruvate. It functions in the pathway quinol/quinone metabolism; 1,4-dihydroxy-2-naphthoate biosynthesis; 1,4-dihydroxy-2-naphthoate from chorismate: step 3/7. The protein operates within quinol/quinone metabolism; menaquinone biosynthesis. Functionally, catalyzes a proton abstraction reaction that results in 2,5-elimination of pyruvate from 2-succinyl-5-enolpyruvyl-6-hydroxy-3-cyclohexene-1-carboxylate (SEPHCHC) and the formation of 2-succinyl-6-hydroxy-2,4-cyclohexadiene-1-carboxylate (SHCHC). The protein is 2-succinyl-6-hydroxy-2,4-cyclohexadiene-1-carboxylate synthase of Escherichia coli (strain SMS-3-5 / SECEC).